The chain runs to 143 residues: MEALVLVGHGSRLPYSKELLVKLAEKVKERNLFPIVEIGLMEFSEPTIPQAVKKAIEQGAKRIIVVPVFLAHGIHTTRDIPRLLGLIEDNHEHHHEHSHHHHHHHHHEHEKLEIPEDVEIIYREPIGADDRIVDIIIDRAFGR.

H9 functions as the Proton acceptor in the catalytic mechanism. H9 contacts Co(2+). H9 contributes to the Ni(2+) binding site. Substrate-binding positions include E45 and 70–75; that span reads LAHGIH. H75 lines the Co(2+) pocket. H75 contacts Ni(2+).

It belongs to the CbiX family. CbiXS subfamily. Homotetramer; dimer of dimers.

The catalysed reaction is Co-sirohydrochlorin + 2 H(+) = sirohydrochlorin + Co(2+). The enzyme catalyses Ni-sirohydrochlorin + 2 H(+) = sirohydrochlorin + Ni(2+). The protein operates within cofactor biosynthesis; adenosylcobalamin biosynthesis; cob(II)yrinate a,c-diamide from sirohydrochlorin (anaerobic route): step 1/10. In terms of biological role, catalyzes the insertion of Co(2+) into sirohydrochlorin as part of the anaerobic pathway to cobalamin biosynthesis. Involved in the biosynthesis of the unique nickel-containing tetrapyrrole coenzyme F430, the prosthetic group of methyl-coenzyme M reductase (MCR), which plays a key role in methanogenesis and anaerobic methane oxidation. Catalyzes the insertion of Ni(2+) into sirohydrochlorin to yield Ni-sirohydrochlorin. The polypeptide is Sirohydrochlorin cobaltochelatase (Methanocaldococcus jannaschii (strain ATCC 43067 / DSM 2661 / JAL-1 / JCM 10045 / NBRC 100440) (Methanococcus jannaschii)).